The chain runs to 160 residues: 2-C-methyl-D-erythritol 2,4-cyclodiphosphate synthase (160 aa).

Residues D9 and H11 each contribute to the a divalent metal cation site. 4-CDP-2-C-methyl-D-erythritol 2-phosphate-binding positions include 9 to 11 (DVH) and 35 to 36 (HS). H43 is a binding site for a divalent metal cation. 4-CDP-2-C-methyl-D-erythritol 2-phosphate is bound by residues 57–59 (DIG), 62–66 (FPDTD), 133–136 (TTTE), F140, and R143.

The protein belongs to the IspF family. In terms of assembly, homotrimer. Requires a divalent metal cation as cofactor.

It carries out the reaction 4-CDP-2-C-methyl-D-erythritol 2-phosphate = 2-C-methyl-D-erythritol 2,4-cyclic diphosphate + CMP. It functions in the pathway isoprenoid biosynthesis; isopentenyl diphosphate biosynthesis via DXP pathway; isopentenyl diphosphate from 1-deoxy-D-xylulose 5-phosphate: step 4/6. In terms of biological role, involved in the biosynthesis of isopentenyl diphosphate (IPP) and dimethylallyl diphosphate (DMAPP), two major building blocks of isoprenoid compounds. Catalyzes the conversion of 4-diphosphocytidyl-2-C-methyl-D-erythritol 2-phosphate (CDP-ME2P) to 2-C-methyl-D-erythritol 2,4-cyclodiphosphate (ME-CPP) with a corresponding release of cytidine 5-monophosphate (CMP). In Haemophilus ducreyi (strain 35000HP / ATCC 700724), this protein is 2-C-methyl-D-erythritol 2,4-cyclodiphosphate synthase.